The primary structure comprises 432 residues: Trigger factor (432 aa).

Residues 161-246 (EDRVTIDFTG…LKKVEERELP (86 aa)) enclose the PPIase FKBP-type domain.

It belongs to the FKBP-type PPIase family. Tig subfamily.

It localises to the cytoplasm. It carries out the reaction [protein]-peptidylproline (omega=180) = [protein]-peptidylproline (omega=0). Functionally, involved in protein export. Acts as a chaperone by maintaining the newly synthesized protein in an open conformation. Functions as a peptidyl-prolyl cis-trans isomerase. The sequence is that of Trigger factor from Klebsiella pneumoniae (strain 342).